The following is a 476-amino-acid chain: Arginine biosynthesis bifunctional protein ArgJ, mitochondrial (476 aa).

The substrate site is built by Thr204, Lys233, Thr244, Glu331, Asn471, and Thr476. The active-site Nucleophile is Thr244.

It belongs to the ArgJ family. As to quaternary structure, heterodimer of an alpha and a beta chain. In terms of processing, the alpha and beta chains are autoproteolytically processed from a single precursor protein within the mitochondrion.

Its subcellular location is the mitochondrion matrix. It catalyses the reaction N(2)-acetyl-L-ornithine + L-glutamate = N-acetyl-L-glutamate + L-ornithine. It carries out the reaction L-glutamate + acetyl-CoA = N-acetyl-L-glutamate + CoA + H(+). It functions in the pathway amino-acid biosynthesis; L-arginine biosynthesis; L-ornithine and N-acetyl-L-glutamate from L-glutamate and N(2)-acetyl-L-ornithine (cyclic): step 1/1. It participates in amino-acid biosynthesis; L-arginine biosynthesis; N(2)-acetyl-L-ornithine from L-glutamate: step 1/4. Catalyzes two activities which are involved in the cyclic version of arginine biosynthesis: the synthesis of acetylglutamate from glutamate and acetyl-CoA, and of ornithine by transacetylation between acetylornithine and glutamate. This Arthroderma otae (strain ATCC MYA-4605 / CBS 113480) (Microsporum canis) protein is Arginine biosynthesis bifunctional protein ArgJ, mitochondrial.